We begin with the raw amino-acid sequence, 374 residues long: Ribosomal RNA large subunit methyltransferase G (374 aa).

It belongs to the methyltransferase superfamily. RlmG family.

It is found in the cytoplasm. It catalyses the reaction guanosine(1835) in 23S rRNA + S-adenosyl-L-methionine = N(2)-methylguanosine(1835) in 23S rRNA + S-adenosyl-L-homocysteine + H(+). Its function is as follows. Specifically methylates the guanine in position 1835 (m2G1835) of 23S rRNA. The chain is Ribosomal RNA large subunit methyltransferase G from Pseudomonas savastanoi pv. phaseolicola (strain 1448A / Race 6) (Pseudomonas syringae pv. phaseolicola (strain 1448A / Race 6)).